Consider the following 132-residue polypeptide: NAD(P) transhydrogenase subunit alpha part 2 (132 aa).

The next 3 membrane-spanning stretches (helical) occupy residues 43–63 (PLVFAITIFVLASFVGYYVVW), 72–92 (PLMSITNAISGIIVISSMIAI), and 103–123 (LLGSFATLLASINIFGGFIVT).

In terms of assembly, complex of an alpha and a beta chain; in Rickettsia, the alpha chain seems to be made of two subunits.

Its subcellular location is the cell inner membrane. It catalyses the reaction NAD(+) + NADPH + H(+)(in) = NADH + NADP(+) + H(+)(out). In terms of biological role, the transhydrogenation between NADH and NADP is coupled to respiration and ATP hydrolysis and functions as a proton pump across the membrane. This Rickettsia prowazekii (strain Madrid E) protein is NAD(P) transhydrogenase subunit alpha part 2 (pntAB).